Here is a 229-residue protein sequence, read N- to C-terminus: uncharacterized protein (229 aa).

The disordered stretch occupies residues 1-41; the sequence is MRSAKVGVARQLETKKPQTGRKISTSSRGTIHSQQSQPEDI. Polar residues predominate over residues 21–39; the sequence is RKISTSSRGTIHSQQSQPE. 4 EF-hand domains span residues 48–83, 84–119, 123–158, and 159–193; these read KELKEYRQLFNMFDTDGSGAIGNEELKQAMISIGLH, ANKAEIDNVIKEVDADGNGEIDFEEFCACMKKSQNI, TNEELIRECFEIFDQDRNGIITENEFKYIAKEFGDF, and DDELAEKVFRELDVSANGHLSADQFATIVEDYLLN. Residues aspartate 61, aspartate 63, serine 65, glutamate 72, aspartate 97, aspartate 99, asparagine 101, glutamate 103, glutamate 108, aspartate 136, aspartate 138, asparagine 140, and glutamate 147 each coordinate Ca(2+). The segment covering 194–217 has biased composition (basic and acidic residues); it reads DPKHDIDTGDSDVERYDDRHDDRA. The tract at residues 194-229 is disordered; it reads DPKHDIDTGDSDVERYDDRHDDRASPMPNHLSTVPE.

This is an uncharacterized protein from Caenorhabditis elegans.